The chain runs to 171 residues: PRA1-like protein (171 aa).

Helical transmembrane passes span 67–87 (AIIA…LIVI), 119–139 (VILA…ETII), and 140–160 (WLVG…EPPV).

Belongs to the PRA1 family.

The protein localises to the membrane. The protein is PRA1-like protein of Schizosaccharomyces pombe (strain 972 / ATCC 24843) (Fission yeast).